A 505-amino-acid polypeptide reads, in one-letter code: Glutamate--tRNA ligase (505 aa).

The 'HIGH' region signature appears at 12-22 (PSPTGALHIGG). A 'KMSKS' region motif is present at residues 260-264 (KLSKR). Position 263 (Lys-263) interacts with ATP.

This sequence belongs to the class-I aminoacyl-tRNA synthetase family. Glutamate--tRNA ligase type 1 subfamily. In terms of assembly, monomer.

It localises to the cytoplasm. It carries out the reaction tRNA(Glu) + L-glutamate + ATP = L-glutamyl-tRNA(Glu) + AMP + diphosphate. Its function is as follows. Catalyzes the attachment of glutamate to tRNA(Glu) in a two-step reaction: glutamate is first activated by ATP to form Glu-AMP and then transferred to the acceptor end of tRNA(Glu). This is Glutamate--tRNA ligase from Phocaeicola vulgatus (strain ATCC 8482 / DSM 1447 / JCM 5826 / CCUG 4940 / NBRC 14291 / NCTC 11154) (Bacteroides vulgatus).